The following is a 298-amino-acid chain: Acetylglutamate kinase (298 aa).

Substrate is bound by residues glycine 69–glycine 70, arginine 91, and asparagine 196.

It belongs to the acetylglutamate kinase family. ArgB subfamily.

The protein localises to the cytoplasm. It catalyses the reaction N-acetyl-L-glutamate + ATP = N-acetyl-L-glutamyl 5-phosphate + ADP. It functions in the pathway amino-acid biosynthesis; L-arginine biosynthesis; N(2)-acetyl-L-ornithine from L-glutamate: step 2/4. Catalyzes the ATP-dependent phosphorylation of N-acetyl-L-glutamate. This chain is Acetylglutamate kinase, found in Granulibacter bethesdensis (strain ATCC BAA-1260 / CGDNIH1).